Reading from the N-terminus, the 75-residue chain is MKPDIHPDYQEITVTCSCGSTFQTRSTMGKPLHIEVCSVCHPFYTGKQKIVDTAGRVEKFRQKYGKKVEKQPAAG.

The Zn(2+) site is built by Cys16, Cys18, Cys37, and Cys40.

It belongs to the bacterial ribosomal protein bL31 family. Type A subfamily. As to quaternary structure, part of the 50S ribosomal subunit. The cofactor is Zn(2+).

Functionally, binds the 23S rRNA. This Nitrosospira multiformis (strain ATCC 25196 / NCIMB 11849 / C 71) protein is Large ribosomal subunit protein bL31.